The sequence spans 616 residues: Probable Xaa-Pro aminopeptidase P (616 aa).

Residues Asp413, Asp424, Glu522, and Glu536 each contribute to the Mn(2+) site.

This sequence belongs to the peptidase M24B family. Requires Mn(2+) as cofactor.

It carries out the reaction Release of any N-terminal amino acid, including proline, that is linked to proline, even from a dipeptide or tripeptide.. Its function is as follows. Catalyzes the removal of a penultimate prolyl residue from the N-termini of peptides. This is Probable Xaa-Pro aminopeptidase P (AMPP) from Paracoccidioides lutzii (strain ATCC MYA-826 / Pb01) (Paracoccidioides brasiliensis).